The chain runs to 65 residues: Large ribosomal subunit protein uL29 (65 aa).

The protein belongs to the universal ribosomal protein uL29 family.

The protein is Large ribosomal subunit protein uL29 of Paracidovorax citrulli (strain AAC00-1) (Acidovorax citrulli).